Reading from the N-terminus, the 503-residue chain is 2,3-bisphosphoglycerate-independent phosphoglycerate mutase (503 aa).

Mn(2+)-binding residues include D10 and S60. The active-site Phosphoserine intermediate is the S60. Residues H121, 150–151 (RD), R181, R187, 256–259 (RPDR), and K330 contribute to the substrate site. 5 residues coordinate Mn(2+): D396, H400, D437, H438, and H455.

The protein belongs to the BPG-independent phosphoglycerate mutase family. In terms of assembly, monomer. Mn(2+) serves as cofactor.

The enzyme catalyses (2R)-2-phosphoglycerate = (2R)-3-phosphoglycerate. The protein operates within carbohydrate degradation; glycolysis; pyruvate from D-glyceraldehyde 3-phosphate: step 3/5. In terms of biological role, catalyzes the interconversion of 2-phosphoglycerate and 3-phosphoglycerate. In Mycoplasmoides gallisepticum (strain R(low / passage 15 / clone 2)) (Mycoplasma gallisepticum), this protein is 2,3-bisphosphoglycerate-independent phosphoglycerate mutase.